Reading from the N-terminus, the 724-residue chain is Protein-glutamine gamma-glutamyltransferase 5 (724 aa).

Position 2 is an N-acetylalanine (Ala2). Catalysis depends on residues Cys283, His342, and Asp365. Residues Asn405, Asp407, Glu453, and Glu458 each coordinate Ca(2+). 2 stretches are compositionally biased toward polar residues: residues 473–486 (RSQG…NPFS) and 495–505 (ARSPDSPSLQP). Residues 473-505 (RSQGPHQANSNPFSSVPPRHNSARSPDSPSLQP) form a disordered region.

The protein belongs to the transglutaminase superfamily. Transglutaminase family. Ca(2+) is required as a cofactor.

The protein resides in the cytoplasm. It catalyses the reaction L-glutaminyl-[protein] + L-lysyl-[protein] = [protein]-L-lysyl-N(6)-5-L-glutamyl-[protein] + NH4(+). Functionally, catalyzes the cross-linking of proteins and the conjugation of polyamines to proteins. Contributes to the formation of the cornified cell envelope of keratinocytes. This chain is Protein-glutamine gamma-glutamyltransferase 5 (Tgm5), found in Mus musculus (Mouse).